The following is a 200-amino-acid chain: MKIVLASNNRGKLAELQAMFAPLGVELIRQGDLFEGEAPEPHCTFVENALSKARFAAERTGLPAIADDAGMCVSHFGGLPGVDTAYYCTQFGYEKSDDNNVRALLEQMQGVADRRAAMVSTLVGVRSARDPEPLIAMGRVLGEITTERRGTQGFGFDPVMYIPELGQTFAEMDPAVKHAHSHRGRATLQMIELVRERWVR.

7–12 (SNNRGK) is a binding site for substrate. The Proton acceptor role is filled by Asp68. Asp68 provides a ligand contact to Mg(2+). Substrate contacts are provided by residues Ala69, 154 to 157 (FGFD), Lys177, and 182 to 183 (HR).

The protein belongs to the HAM1 NTPase family. Homodimer. Requires Mg(2+) as cofactor.

It catalyses the reaction XTP + H2O = XMP + diphosphate + H(+). The enzyme catalyses dITP + H2O = dIMP + diphosphate + H(+). It carries out the reaction ITP + H2O = IMP + diphosphate + H(+). Functionally, pyrophosphatase that catalyzes the hydrolysis of nucleoside triphosphates to their monophosphate derivatives, with a high preference for the non-canonical purine nucleotides XTP (xanthosine triphosphate), dITP (deoxyinosine triphosphate) and ITP. Seems to function as a house-cleaning enzyme that removes non-canonical purine nucleotides from the nucleotide pool, thus preventing their incorporation into DNA/RNA and avoiding chromosomal lesions. The protein is dITP/XTP pyrophosphatase of Delftia acidovorans (strain DSM 14801 / SPH-1).